We begin with the raw amino-acid sequence, 592 residues long: PiggyBac transposable element-derived protein 2 (592 aa).

The interval 31-69 (EEEESNNNREEIFIAPPDNAAGEFTDEDSGDEDSQRGAH) is disordered.

The protein is PiggyBac transposable element-derived protein 2 (PGBD2) of Homo sapiens (Human).